The primary structure comprises 216 residues: Probable GTP-binding protein EngB (216 aa).

In terms of domain architecture, EngB-type G spans 43–216 (DRIEVCFAGR…TLRSIIAHLD (174 aa)). GTP-binding positions include 51-58 (GRSNVGKS), 78-82 (GRTQE), 96-99 (DLPG), 163-166 (TKAD), and 197-199 (TSS). Mg(2+)-binding residues include S58 and T80.

Belongs to the TRAFAC class TrmE-Era-EngA-EngB-Septin-like GTPase superfamily. EngB GTPase family. The cofactor is Mg(2+).

Functionally, necessary for normal cell division and for the maintenance of normal septation. This Ruegeria sp. (strain TM1040) (Silicibacter sp.) protein is Probable GTP-binding protein EngB.